The following is a 159-amino-acid chain: NADH-quinone oxidoreductase subunit B (159 aa).

[4Fe-4S] cluster is bound by residues cysteine 36, cysteine 37, cysteine 102, and cysteine 132.

The protein belongs to the complex I 20 kDa subunit family. In terms of assembly, NDH-1 is composed of 14 different subunits. Subunits NuoB, C, D, E, F, and G constitute the peripheral sector of the complex. [4Fe-4S] cluster is required as a cofactor.

The protein resides in the cell inner membrane. The enzyme catalyses a quinone + NADH + 5 H(+)(in) = a quinol + NAD(+) + 4 H(+)(out). Its function is as follows. NDH-1 shuttles electrons from NADH, via FMN and iron-sulfur (Fe-S) centers, to quinones in the respiratory chain. Couples the redox reaction to proton translocation (for every two electrons transferred, four hydrogen ions are translocated across the cytoplasmic membrane), and thus conserves the redox energy in a proton gradient. The chain is NADH-quinone oxidoreductase subunit B from Paracidovorax citrulli (strain AAC00-1) (Acidovorax citrulli).